The sequence spans 248 residues: Ribosomal RNA small subunit methyltransferase A (248 aa).

Residues His11, Leu13, Gly38, Glu60, Asp83, and Asn101 each contribute to the S-adenosyl-L-methionine site.

The protein belongs to the class I-like SAM-binding methyltransferase superfamily. rRNA adenine N(6)-methyltransferase family. RsmA subfamily.

Its subcellular location is the cytoplasm. It catalyses the reaction adenosine(1518)/adenosine(1519) in 16S rRNA + 4 S-adenosyl-L-methionine = N(6)-dimethyladenosine(1518)/N(6)-dimethyladenosine(1519) in 16S rRNA + 4 S-adenosyl-L-homocysteine + 4 H(+). Functionally, specifically dimethylates two adjacent adenosines (A1518 and A1519) in the loop of a conserved hairpin near the 3'-end of 16S rRNA in the 30S particle. May play a critical role in biogenesis of 30S subunits. The sequence is that of Ribosomal RNA small subunit methyltransferase A from Aquifex aeolicus (strain VF5).